Reading from the N-terminus, the 362-residue chain is Chorismate synthase (362 aa).

Arg48 and Arg54 together coordinate NADP(+). FMN-binding positions include 131–133, 243–244, Gly287, 302–306, and Arg328; these read RSS, NA, and KPTSS.

The protein belongs to the chorismate synthase family. Homotetramer. The cofactor is FMNH2.

The enzyme catalyses 5-O-(1-carboxyvinyl)-3-phosphoshikimate = chorismate + phosphate. It participates in metabolic intermediate biosynthesis; chorismate biosynthesis; chorismate from D-erythrose 4-phosphate and phosphoenolpyruvate: step 7/7. Functionally, catalyzes the anti-1,4-elimination of the C-3 phosphate and the C-6 proR hydrogen from 5-enolpyruvylshikimate-3-phosphate (EPSP) to yield chorismate, which is the branch point compound that serves as the starting substrate for the three terminal pathways of aromatic amino acid biosynthesis. This reaction introduces a second double bond into the aromatic ring system. The chain is Chorismate synthase from Rhodopseudomonas palustris (strain BisB18).